A 54-amino-acid chain; its full sequence is Chymosin (54 aa).

The propeptide at 1–27 (SEITRVPLHKGKSLRKALKEHGLLEBF) is activation peptide.

The protein belongs to the peptidase A1 family. Monomer.

The enzyme catalyses Broad specificity similar to that of pepsin A. Clots milk by cleavage of a single 104-Ser-Phe-|-Met-Ala-107 bond in kappa-chain of casein.. Functionally, chymosin is synthesized in the mucosa of the stomach. The enzyme hydrolyzes casein to paracasein. This is Chymosin (CYM) from Felis catus (Cat).